A 108-amino-acid chain; its full sequence is uncharacterized protein (108 aa).

The segment covering 1–14 (MSDSNSRLVYSTET) has biased composition (polar residues). The segment at 1 to 31 (MSDSNSRLVYSTETGRIDEPKAAPVRPKGDG) is disordered. The segment covering 15–31 (GRIDEPKAAPVRPKGDG) has biased composition (basic and acidic residues).

It belongs to the SUI1 family.

This is an uncharacterized protein from Escherichia coli (strain K12).